The following is a 402-amino-acid chain: Ubiquitin-like modifier-activating enzyme 5 (402 aa).

The ATP site is built by Gly81, Asp102, Lys125, Asn148, and Asn182. Zn(2+) is bound by residues Cys224 and Cys227. Residue Cys248 is the Glycyl thioester intermediate of the active site. 2 residues coordinate Zn(2+): Cys301 and Cys306. Positions 369–402 (EAPEKSSETSEETVTTAPPDDASLEDLMAQMKSM) are disordered.

This sequence belongs to the ubiquitin-activating E1 family. UBA5 subfamily.

E1-like enzyme which activates UFM1. This chain is Ubiquitin-like modifier-activating enzyme 5, found in Drosophila erecta (Fruit fly).